The following is a 328-amino-acid chain: Aryl-hydrocarbon-interacting protein-like 1 (328 aa).

In terms of domain architecture, PPIase FKBP-type spans 53–145; the sequence is KQVGHPMHII…DLDELQKEPQ (93 aa). 3 TPR repeats span residues 178–211, 230–263, and 264–297; these read VPILHGEGNRLFKLGRYEEASNKYQEAIVCLRNL, NTLILNYCQCLLKKEEYYEVLEHTSDILRHHPGI, and VKAYYVRARAHAEVWNEAEAKADLEKVLELEPSM.

In terms of assembly, directly interacts with NUB1.

It localises to the cytoplasm. It is found in the nucleus. Its function is as follows. May be important in protein trafficking and/or protein folding and stabilization. The polypeptide is Aryl-hydrocarbon-interacting protein-like 1 (AIPL1) (Bos taurus (Bovine)).